Here is a 424-residue protein sequence, read N- to C-terminus: Protein FAM43A (424 aa).

Positions 261 to 297 (QQEEELQEEEEEHLEDCLEEEEEEDGVGDGDPAEEEA) are enriched in acidic residues. Disordered regions lie at residues 261 to 299 (QQEEELQEEEEEHLEDCLEEEEEEDGVGDGDPAEEEAEA) and 382 to 424 (LLSG…PYSG). Residues 382 to 394 (LLSGESTGSESSI) are compositionally biased toward low complexity. Residues 405-418 (SPGNPSGPADSTSL) show a composition bias toward polar residues.

Belongs to the FAM43 family.

The chain is Protein FAM43A (Fam43a) from Mus musculus (Mouse).